We begin with the raw amino-acid sequence, 63 residues long: Large ribosomal subunit protein uL29 (63 aa).

The protein belongs to the universal ribosomal protein uL29 family.

This is Large ribosomal subunit protein uL29 from Shewanella halifaxensis (strain HAW-EB4).